The following is an 86-amino-acid chain: uncharacterized protein (86 aa).

The protein to M.jannaschii MJ0526.1.

This is an uncharacterized protein from Methanothermobacter thermautotrophicus (strain ATCC 29096 / DSM 1053 / JCM 10044 / NBRC 100330 / Delta H) (Methanobacterium thermoautotrophicum).